Consider the following 208-residue polypeptide: Outer-membrane lipoprotein carrier protein (208 aa).

Residues 1–21 form the signal peptide; sequence MRLIRTLFVAALAMGASLAHA.

The protein belongs to the LolA family. As to quaternary structure, monomer.

The protein resides in the periplasm. In terms of biological role, participates in the translocation of lipoproteins from the inner membrane to the outer membrane. Only forms a complex with a lipoprotein if the residue after the N-terminal Cys is not an aspartate (The Asp acts as a targeting signal to indicate that the lipoprotein should stay in the inner membrane). In Pseudomonas aeruginosa (strain UCBPP-PA14), this protein is Outer-membrane lipoprotein carrier protein.